The sequence spans 293 residues: MTVFKHIAIIGLGLIGSSAARATKAYCPDVTVSLYDKSEFVRDRARALNLGDNVTDDIQDAVREADLVLLCVPVRAMGIVAAAMAPALKKDVIICDTGSVKVSVIKTLQDNLPNHIIVPSHPLAGTENNGPDAGFAELFQDHPVILTPDAHTPAQAIAYIADYWEEIGGRINLMSAEHHDHVLALTSHLPHVIAYQLIGMVSGYEKKSRTPIMRYSAGSFRDATRVAASEPRLWQDIMLENAPALLPVLDHFIADLKKLRTAIASQDGDYLLEHFKESQKARLALKTDHDIRP.

The region spanning 5-293 (KHIAIIGLGL…ALKTDHDIRP (289 aa)) is the Prephenate/arogenate dehydrogenase domain. An NAD(+)-binding site is contributed by 6-30 (HIAIIGLGLIGSSAARATKAYCPDV).

The protein belongs to the prephenate/arogenate dehydrogenase family. In terms of assembly, homodimer.

The enzyme catalyses L-arogenate + NAD(+) = L-tyrosine + CO2 + NADH. It catalyses the reaction prephenate + NAD(+) = 3-(4-hydroxyphenyl)pyruvate + CO2 + NADH. It functions in the pathway amino-acid biosynthesis; L-tyrosine biosynthesis; (4-hydroxyphenyl)pyruvate from prephenate (NAD(+) route): step 1/1. The protein operates within amino-acid biosynthesis; L-tyrosine biosynthesis; L-tyrosine from L-arogenate (NAD(+) route): step 1/1. Insensitive to feedback inhibition by L-tyrosine. Its function is as follows. Can function as either prephenate dehydrogenase or as arogenate dehydrogenase in the biosynthesis of L-tyrosine. Catalyzes two analogous reactions: converts prephenate to 4-hydroxyphenylpyruvate and transforms L-arogenate to L-tyrosine. Is not able to utilize NADP(+) instead of NAD(+) as cosubstrate. This is Cyclohexadienyl dehydrogenase from Zymomonas mobilis subsp. mobilis (strain ATCC 31821 / ZM4 / CP4).